A 209-amino-acid chain; its full sequence is Ribonuclease HII (209 aa).

The RNase H type-2 domain maps to 18-209 (GLVAGVDEVG…FKPVKALLER (192 aa)). A divalent metal cation-binding residues include aspartate 24, glutamate 25, and aspartate 116.

Belongs to the RNase HII family. Mn(2+) serves as cofactor. Requires Mg(2+) as cofactor.

It is found in the cytoplasm. It catalyses the reaction Endonucleolytic cleavage to 5'-phosphomonoester.. Functionally, endonuclease that specifically degrades the RNA of RNA-DNA hybrids. The chain is Ribonuclease HII from Shewanella sp. (strain ANA-3).